The sequence spans 343 residues: Undecaprenyl-diphosphatase 2 (343 aa).

The next 4 membrane-spanning stretches (helical) occupy residues 21–41 (LFPV…GGSW), 57–77 (PYLT…LVFF), 104–124 (LAWL…ALEH), and 129–149 (LFAK…ILLA). Positions 179–193 (VPAPATVPTQTTSAP) are enriched in low complexity. The interval 179–202 (VPAPATVPTQTTSAPGGRATARHT) is disordered. 4 helical membrane passes run 225-245 (AGVI…RSGI), 265-285 (FLLA…ALAG), 294-314 (QVIL…RFLV), and 322-342 (LTPF…RFAI).

The protein belongs to the UppP family.

It is found in the cell membrane. The catalysed reaction is di-trans,octa-cis-undecaprenyl diphosphate + H2O = di-trans,octa-cis-undecaprenyl phosphate + phosphate + H(+). Catalyzes the dephosphorylation of undecaprenyl diphosphate (UPP). Confers resistance to bacitracin. The polypeptide is Undecaprenyl-diphosphatase 2 (Frankia alni (strain DSM 45986 / CECT 9034 / ACN14a)).